The sequence spans 349 residues: Twinfilin-2-B (349 aa).

ADF-H domains are found at residues 4 to 139 and 177 to 313; these read QTGI…KHVS and GLSF…DEVH. Positions 321 to 349 are disordered; the sequence is QAFAKPKGPAGKRGQKRLIKGPGENGEDS.

It belongs to the actin-binding proteins ADF family. Twinfilin subfamily. As to quaternary structure, interacts with G-actin; ADP-actin form and capping protein (CP).

The protein resides in the cytoplasm. It localises to the cytoskeleton. It is found in the perinuclear region. In terms of biological role, actin-binding protein involved in motile and morphological processes. Inhibits actin polymerization, likely by sequestering G-actin. In Xenopus laevis (African clawed frog), this protein is Twinfilin-2-B (twf2-b).